The sequence spans 130 residues: uncharacterized protein (130 aa).

The N-terminal stretch at 1–18 is a signal peptide; the sequence is MVEVWWSLIGAAVPALIA.

This is an uncharacterized protein from Arabidopsis thaliana (Mouse-ear cress).